Here is a 183-residue protein sequence, read N- to C-terminus: Small ribosomal subunit protein uS4c (183 aa).

Residues 82-143 (MRLDNILFRL…KQRSKALIQN (62 aa)) form the S4 RNA-binding domain.

Belongs to the universal ribosomal protein uS4 family. As to quaternary structure, part of the 30S ribosomal subunit. Contacts protein S5. The interaction surface between S4 and S5 is involved in control of translational fidelity.

It localises to the plastid. The protein resides in the chloroplast. One of the primary rRNA binding proteins, it binds directly to 16S rRNA where it nucleates assembly of the body of the 30S subunit. In terms of biological role, with S5 and S12 plays an important role in translational accuracy. This Sparaxis sp. (strain Lejeune 1997) protein is Small ribosomal subunit protein uS4c (rps4).